Here is a 248-residue protein sequence, read N- to C-terminus: Aspartate/glutamate leucyltransferase (248 aa).

It belongs to the R-transferase family. Bpt subfamily.

It is found in the cytoplasm. It catalyses the reaction N-terminal L-glutamyl-[protein] + L-leucyl-tRNA(Leu) = N-terminal L-leucyl-L-glutamyl-[protein] + tRNA(Leu) + H(+). It carries out the reaction N-terminal L-aspartyl-[protein] + L-leucyl-tRNA(Leu) = N-terminal L-leucyl-L-aspartyl-[protein] + tRNA(Leu) + H(+). Its function is as follows. Functions in the N-end rule pathway of protein degradation where it conjugates Leu from its aminoacyl-tRNA to the N-termini of proteins containing an N-terminal aspartate or glutamate. The chain is Aspartate/glutamate leucyltransferase from Methylobacterium nodulans (strain LMG 21967 / CNCM I-2342 / ORS 2060).